Here is a 1940-residue protein sequence, read N- to C-terminus: Myosin-2 (1940 aa).

Residues 33–82 (DAKTSVFVAEPKESFVKGTIQSREGGKVTVKTEGGATLTVKEDQVFPMNP) form the Myosin N-terminal SH3-like domain. 2 positions are modified to phosphothreonine: threonine 64 and threonine 69. The region spanning 86-783 (DKIEDMAMMT…LLGLLEEMRD (698 aa)) is the Myosin motor domain. Lysine 130 is subject to N6,N6,N6-trimethyllysine. 179–186 (GESGAGKT) is a binding site for ATP. Position 389 is a phosphotyrosine (tyrosine 389). Phosphoserine is present on serine 392. Threonine 419 is modified (phosphothreonine). Serine 625 carries the post-translational modification Phosphoserine. The segment at 660–682 (LNKLMTNLRSTHPHFVRCIIPNE) is actin-binding. Pros-methylhistidine is present on histidine 758. The interval 762–776 (KFGHTKVFFKAGLLG) is actin-binding. The region spanning 786–815 (LAQLMTRTQARCRGFLARVEYQKMVERRES) is the IQ domain. Residues 844–1940 (LLKSAETEKE…EVHTKIISEE (1097 aa)) are a coiled coil. 4 positions are modified to phosphoserine: serine 1093, serine 1097, serine 1163, and serine 1238. Position 1242 is a phosphothreonine (threonine 1242). Serine 1244 carries the phosphoserine modification. 2 positions are modified to phosphothreonine: threonine 1256 and threonine 1287. Phosphoserine occurs at positions 1289, 1293, 1304, and 1307. Phosphotyrosine is present on tyrosine 1465. Threonine 1468 bears the Phosphothreonine mark. The residue at position 1493 (tyrosine 1493) is a Phosphotyrosine. Residue serine 1496 is modified to Phosphoserine. A Phosphothreonine modification is found at threonine 1502. A Phosphoserine modification is found at serine 1515. At threonine 1518 the chain carries Phosphothreonine. Residues serine 1543, serine 1555, serine 1575, serine 1601, serine 1715, and serine 1727 each carry the phosphoserine modification. Residues threonine 1731 and threonine 1737 each carry the phosphothreonine modification. A disordered region spans residues 1886-1905 (QAEEAEEQSNTNLSKFRKLQ).

It belongs to the TRAFAC class myosin-kinesin ATPase superfamily. Myosin family. As to quaternary structure, muscle myosin is a hexameric protein that consists of 2 heavy chain subunits (MHC), 2 alkali light chain subunits (MLC) and 2 regulatory light chain subunits (MLC-2). Interacts with GCSAM.

It is found in the cytoplasm. The protein localises to the myofibril. Myosins are actin-based motor molecules with ATPase activity essential for muscle contraction. This chain is Myosin-2 (MYH2), found in Bos taurus (Bovine).